The sequence spans 766 residues: Ubiquitin carboxyl-terminal hydrolase creB (766 aa).

A disordered region spans residues 1-32 (MGSFLKSFRKDVGSAAPSVGAPPAKKEPQPLP). Residues 13 to 23 (GSAAPSVGAPP) are compositionally biased toward low complexity. Residues 55–466 (YGMENFGNTC…CAYVLFYQET (412 aa)) form the USP domain. Cys-64 functions as the Nucleophile in the catalytic mechanism. Disordered regions lie at residues 115–145 (EALAEKQKAANSPRPGQPPNPQQKPEDKDSP) and 243–266 (ESPQPASDVSDSVIPSSSSGSRTP). Over residues 249–263 (SDVSDSVIPSSSSGS) the composition is skewed to low complexity. His-417 acts as the Proton acceptor in catalysis. Residues 526 to 752 (APTAPQLSTH…HDRSSHGKWR (227 aa)) form a disordered region. Pro residues predominate over residues 548–572 (SPAPDPAPLTSLPPIPPIPETPPAP). Residues 573-620 (LTSRKSDLQSKKERVKEEKERKAAEKEKEKQRRKEIETRLKDRQRRED) adopt a coiled-coil conformation. 2 stretches are compositionally biased toward basic and acidic residues: residues 576–643 (RKSD…RNHA) and 734–747 (EQEHIKNSKHDRSS).

The protein belongs to the peptidase C19 family. Interacts with creA, creC and qutD.

It catalyses the reaction Thiol-dependent hydrolysis of ester, thioester, amide, peptide and isopeptide bonds formed by the C-terminal Gly of ubiquitin (a 76-residue protein attached to proteins as an intracellular targeting signal).. Its function is as follows. Ubiquitin thioesterase component of the regulatory network controlling carbon source utilization through ubiquitination and deubiquitination involving creA, creB, creC, creD and acrB. Deubiquitinates the creA catabolic repressor and the quinate permease qutD. Also plays a role in response to carbon starvation and the control of extracellular proteases activity. The polypeptide is Ubiquitin carboxyl-terminal hydrolase creB (creB) (Emericella nidulans (strain FGSC A4 / ATCC 38163 / CBS 112.46 / NRRL 194 / M139) (Aspergillus nidulans)).